Here is a 393-residue protein sequence, read N- to C-terminus: Nucleoside permease NupC (393 aa).

9 helical membrane passes run 3-23 (YLIG…ASSG), 32-52 (IVVM…TGIG), 87-107 (TTFF…IGIL), 168-188 (LCAS…MTML), 191-211 (EYVV…ASII), 249-269 (VVVA…NGIF), 272-292 (VFGI…AFLV), 334-354 (AIVS…IIAG), and 372-392 (LKLL…VGLI).

This sequence belongs to the concentrative nucleoside transporter (CNT) (TC 2.A.41) family.

Its subcellular location is the cell membrane. Transport of the pyrimidine nucleoside uridine. The chain is Nucleoside permease NupC from Bacillus subtilis (strain 168).